We begin with the raw amino-acid sequence, 889 residues long: Potassium/sodium hyperpolarization-activated cyclic nucleotide-gated channel 2 (889 aa).

The segment covering 1 to 10 (MDARGGGGRP) has biased composition (gly residues). A disordered region spans residues 1 to 159 (MDARGGGGRP…GPAGEPRGSQ (159 aa)). The Cytoplasmic segment spans residues 1–215 (MDARGGGGRP…PYSDFRFYWD (215 aa)). Residues 17–55 (TPAPGPPPPPPPAPPQQQPPPPPPPAPPPGPGPAPPQHP) show a composition bias toward pro residues. Residues 129-155 (GAASGPAPGPGPAEEAGSEEAGPAGEP) are compositionally biased toward low complexity. 2 positions are modified to phosphoserine: Ser-146 and Ser-161. The segment at 158–209 (SQASFMQRQFGALLQPGVNKFSLRMFGSQKAVEREQERVKSAGAWIIHPYSD) is involved in subunit assembly. A helical transmembrane segment spans residues 216-236 (FTMLLFMVGNLIIIPVGITFF). Over 237–240 (KDET) the chain is Extracellular. Residues 241–261 (TAPWIVFNVVSDTFFLMDLVL) form a helical membrane-spanning segment. Residues 262-288 (NFRTGIVIEDNTEIILDPEKIKKKYLR) are Cytoplasmic-facing. The chain crosses the membrane as a helical span at residues 289–309 (TWFVVDFVSSIPVDYIFLIVE). At 310–317 (KGIDSEVY) the chain is on the extracellular side. A helical; Voltage-sensor transmembrane segment spans residues 318-338 (KTARALRIVRFTKILSLLRLL). Residues 339-369 (RLSRLIRYIHQWEEIFHMTYDLASAVMRICN) lie on the Cytoplasmic side of the membrane. The helical transmembrane segment at 370–390 (LISMMLLLCHWDGCLQFLVPM) threads the bilayer. The Extracellular portion of the chain corresponds to 391–413 (LQDFPRNCWVSINGMVNHSWSEL). N-linked (GlcNAc...) asparagine glycosylation occurs at Asn-407. An intramembrane region (pore-forming) is located at residues 414-435 (YSFALFKAMSHMLCIGYGRQAP). Residues 436–440 (ESMTD) are Extracellular-facing. A helical transmembrane segment spans residues 441–461 (IWLTMLSMIVGATCYAMFIGH). At 462–889 (ATALIQSLDS…SARSRLSSNL (428 aa)) the chain is on the cytoplasmic side. Met-599, Gly-608, Glu-609, Ile-610, Cys-611, Arg-618, Thr-619, and Arg-659 together coordinate 3',5'-cyclic AMP. The residue at position 668 (Ser-668) is a Phosphoserine; by PKG/PRKG2. A Phosphoserine modification is found at Ser-754. Residues 754–889 (SPRLVRRPPP…SARSRLSSNL (136 aa)) are disordered. Arg-756 bears the Omega-N-methylarginine mark. Residues 760 to 784 (RPPPGPAPAAASPGPPPPASPPGAP) show a composition bias toward pro residues. 5 positions are modified to phosphoserine: Ser-771, Ser-779, Ser-786, Ser-866, and Ser-868. Residues 785–860 (ASPRAPRTSP…TPAARAAAPS (76 aa)) show a composition bias toward low complexity.

The protein belongs to the potassium channel HCN family. Homotetramer. The channel is composed of a homo- or heterotetrameric complex of pore-forming subunits. Heterotetramer with HCN1. Forms an obligate 4:4 complex with accessory subunit PEX5L. Interacts with KCNE2. In terms of processing, phosphorylation at Ser-668 by PRKG2 shifts the voltage-dependence to more negative voltages, hence counteracting the stimulatory effect of cGMP on gating. Post-translationally, S-palmitoylated. N-glycosylated; required for cell surface trafficking of HCN2. Highly expressed throughout the brain. Detected at low levels in heart.

It localises to the cell membrane. The catalysed reaction is Na(+)(in) = Na(+)(out). It catalyses the reaction K(+)(in) = K(+)(out). It carries out the reaction NH4(+)(in) = NH4(+)(out). Its activity is regulated as follows. Activated by cAMP, and at 10-100 times higher concentrations, also by cGMP. cAMP binding causes a conformation change that leads to the assembly of an active tetramer and channel opening. Binding of cAMP removes a tonic inhibition conferred by cyclic nucleotide-binding domain (CNBD) on channel opening. Channel activity is modulated by intracellular chloride ions and pH; acidic pH shifts the activation to more negative voltages. Inhibited by extracellular cesium ions. Functionally, hyperpolarization-activated ion channel that is permeable to sodium and potassium ions. Displays lower selectivity for K(+) over Na(+) ions. Contributes to the native pacemaker currents in heart (If) and in neurons (Ih). Can also transport ammonium in the distal nephron. Involved in the initiation of neuropathic pain in sensory neurons. This chain is Potassium/sodium hyperpolarization-activated cyclic nucleotide-gated channel 2, found in Homo sapiens (Human).